Here is a 275-residue protein sequence, read N- to C-terminus: Calcium uniporter protein, mitochondrial (275 aa).

The transit peptide at methionine 1–leucine 28 directs the protein to the mitochondrion. The Mitochondrial matrix portion of the chain corresponds to glutamate 29 to alanine 165. Residues valine 125–arginine 157 adopt a coiled-coil conformation. The helical transmembrane segment at isoleucine 166–tryptophan 186 threads the bilayer. The Mitochondrial intermembrane portion of the chain corresponds to tryptophan 187–aspartate 192. Residues tryptophan 191–tyrosine 199 carry the Selectivity filter motif. A helical transmembrane segment spans residues isoleucine 193–phenylalanine 213. Ca(2+) is bound at residue glutamate 195. Residues threonine 214–histidine 275 lie on the Mitochondrial matrix side of the membrane. Positions proline 244–lysine 270 form a coiled coil.

It belongs to the MCU (TC 1.A.77) family. In terms of assembly, homooligomer.

The protein localises to the mitochondrion inner membrane. The catalysed reaction is Ca(2+)(in) = Ca(2+)(out). Its activity is regulated as follows. Inhibited by ruthenium red or its derivative Ru360. Its function is as follows. Mitochondrial inner membrane calcium uniporter that mediates calcium uptake into mitochondria. Constitutes a pore-forming and calcium-conducting subunit. Mitochondrial calcium homeostasis plays key roles in cellular physiology and regulates cell bioenergetics, cytoplasmic calcium signals and activation of cell death pathways. Sufficient to operate as a pore-forming channel without the need of calcium-sensor or auxiliary subunit. The protein is Calcium uniporter protein, mitochondrial of Dictyostelium discoideum (Social amoeba).